The following is a 232-amino-acid chain: YlmG homolog protein 1-1, chloroplastic (232 aa).

Residues 1–16 (MAAITALTLRSPVYLP) constitute a chloroplast transit peptide. 2 helical membrane passes run 147–167 (LTVVAVGIKKWLDIYSGVLMV) and 201–221 (IIPPIFDTLDVSPLLAFAVLG).

It belongs to the YggT family.

The protein localises to the plastid. It localises to the chloroplast thylakoid membrane. In terms of biological role, required for the proper distribution of nucleoids in chloroplasts. The nucleoid partitioning by YLMG1-1 may be related to chloroplast division processes. In Arabidopsis thaliana (Mouse-ear cress), this protein is YlmG homolog protein 1-1, chloroplastic.